The following is a 370-amino-acid chain: Muconate cycloisomerase 1 (370 aa).

K166 is an active-site residue. Positions 195, 221, and 246 each coordinate Mn(2+).

This sequence belongs to the mandelate racemase/muconate lactonizing enzyme family. As to quaternary structure, homooctamer. Mn(2+) is required as a cofactor.

The enzyme catalyses (S)-muconolactone = cis,cis-muconate + H(+). Its pathway is aromatic compound metabolism; beta-ketoadipate pathway; 5-oxo-4,5-dihydro-2-furylacetate from catechol: step 2/3. In terms of biological role, catalyzes a syn cycloisomerization. The protein is Muconate cycloisomerase 1 (catB) of Acinetobacter baylyi (strain ATCC 33305 / BD413 / ADP1).